We begin with the raw amino-acid sequence, 75 residues long: MNPVINYDELLKKIPYKFAIPIAVAKRAENLKEFAHSYVETWDNNYVSIALKELSEGYIRIKNEEILKVLIPNVK.

Belongs to the RNA polymerase subunit omega family. The RNAP catalytic core consists of 2 alpha, 1 beta, 1 beta' and 1 omega subunit. When a sigma factor is associated with the core the holoenzyme is formed, which can initiate transcription.

The catalysed reaction is RNA(n) + a ribonucleoside 5'-triphosphate = RNA(n+1) + diphosphate. Promotes RNA polymerase assembly. Latches the N- and C-terminal regions of the beta' subunit thereby facilitating its interaction with the beta and alpha subunits. The sequence is that of DNA-directed RNA polymerase subunit omega from Thermosipho melanesiensis (strain DSM 12029 / CIP 104789 / BI429).